We begin with the raw amino-acid sequence, 197 residues long: Phosphoheptose isomerase (197 aa).

Residues 34–196 (MVHCLLGGNK…DRTLFPQDEQ (163 aa)) form the SIS domain. 49 to 51 (NGG) serves as a coordination point for substrate. Zn(2+) contacts are provided by H58 and E62. Substrate-binding positions include E62, 91 to 92 (ND), 117 to 119 (STS), S122, and Q172. Positions 172 and 180 each coordinate Zn(2+).

This sequence belongs to the SIS family. GmhA subfamily. As to quaternary structure, homotetramer. The cofactor is Zn(2+).

Its subcellular location is the cytoplasm. It catalyses the reaction 2 D-sedoheptulose 7-phosphate = D-glycero-alpha-D-manno-heptose 7-phosphate + D-glycero-beta-D-manno-heptose 7-phosphate. The protein operates within carbohydrate biosynthesis; D-glycero-D-manno-heptose 7-phosphate biosynthesis; D-glycero-alpha-D-manno-heptose 7-phosphate and D-glycero-beta-D-manno-heptose 7-phosphate from sedoheptulose 7-phosphate: step 1/1. Its function is as follows. Catalyzes the isomerization of sedoheptulose 7-phosphate in D-glycero-D-manno-heptose 7-phosphate. The polypeptide is Phosphoheptose isomerase (Shewanella sp. (strain W3-18-1)).